We begin with the raw amino-acid sequence, 149 residues long: Natriuretic peptides A (149 aa).

A signal peptide spans 1–23; the sequence is MGSPIAASFLLFLAVQLLGQTGA. 2 propeptides span residues 24-121 and 91-101; these read NPVY…AAPR and DGGALGRSPWD. The interval 49–103 is disordered; it reads MPLEDEAESPQALSEQNAEAGAALSPLPEVPPWTGEVSPAQRDGGALGRSPWDSS. Serine 127 is modified (phosphoserine). Cysteine 128 and cysteine 144 are joined by a disulfide. An important for degradation of atrial natriuretic peptide by IDE region spans residues 145–149; it reads NSFRY.

Belongs to the natriuretic peptide family. As to quaternary structure, homodimer; disulfide-linked antiparallel dimer. The precursor molecule is proteolytically cleaved by CORIN at Arg-121 to produce the atrial natriuretic peptide. Undergoes further proteolytic cleavage by unknown proteases to give rise to long-acting natriuretic peptide, vessel dilator and kaliuretic peptide. Additional processing gives rise to the auriculin and atriopeptin peptides. In the kidneys, alternative processing by an unknown protease results in the peptide urodilatin. Post-translationally, cleavage by MME initiates degradation of the factor and thereby regulates its activity. Degradation by IDE results in reduced activation of NPR1 (in vitro). During IDE degradation, the resulting products can temporarily stimulate NPR2 to produce cGMP, before the fragments are completely degraded and inactivated by IDE (in vitro). In terms of processing, degraded by IDE. Phosphorylation on Ser-127 decreases vasorelaxant activity.

The protein localises to the secreted. The protein resides in the perikaryon. It localises to the cell projection. Its function is as follows. Hormone that plays a key role in mediating cardio-renal homeostasis, and is involved in vascular remodeling and regulating energy metabolism. Acts by specifically binding and stimulating NPR1 to produce cGMP, which in turn activates effector proteins, such as PRKG1, that drive various biological responses. Regulates vasodilation, natriuresis, diuresis and aldosterone synthesis and is therefore essential for regulating blood pressure, controlling the extracellular fluid volume and maintaining the fluid-electrolyte balance. Also involved in inhibiting cardiac remodeling and cardiac hypertrophy by inducing cardiomyocyte apoptosis and attenuating the growth of cardiomyocytes and fibroblasts. Plays a role in female pregnancy by promoting trophoblast invasion and spiral artery remodeling in uterus, and thus prevents pregnancy-induced hypertension. In adipose tissue, acts in various cGMP- and PKG-dependent pathways to regulate lipid metabolism and energy homeostasis. This includes up-regulating lipid metabolism and mitochondrial oxygen utilization by activating the AMP-activated protein kinase (AMPK), and increasing energy expenditure by acting via MAPK11 to promote the UCP1-dependent thermogenesis of brown adipose tissue. Binds the clearance receptor NPR3 which removes the hormone from circulation. In terms of biological role, may have a role in cardio-renal homeostasis through regulation of natriuresis, diuresis, vasodilation, and inhibiting aldosterone synthesis. In vitro, promotes the production of cGMP and induces vasodilation. May promote natriuresis, at least in part, by enhancing prostaglandin E2 synthesis resulting in the inhibition of renal Na+-K+-ATPase. However reports on the involvement of this peptide in mammal blood volume and blood pressure homeostasis are conflicting; according to a report, in vivo it is not sufficient to activate cGMP and does not inhibit collecting duct transport nor effect diuresis and natriuresis. Appears to bind to specific receptors that are distinct from the receptors bound by atrial natriuretic peptide and vessel dilator. Possibly enhances protein excretion in urine by decreasing proximal tubular protein reabsorption. Functionally, may have a role in cardio-renal homeostasis through regulation of natriuresis, diuresis, and vasodilation. In vitro, promotes the production of cGMP and induces vasodilation. May promote natriuresis, at least in part, by enhancing prostaglandin E2 synthesis resulting in the inhibition of renal Na+-K+-ATPase. However reports on the involvement of this peptide in mammal blood volume and blood pressure homeostasis are conflicting; according to a report it is not sufficient to activate cGMP and does not inhibit collecting duct transport nor effect diuresis and natriuresis. Appears to bind to specific receptors that are distinct from the receptors bound by the atrial natriuretic and long-acting natriuretic peptides. Possibly functions in protein excretion in urine by maintaining the integrity of the proximal tubules and enhancing protein excretion by decreasing proximal tubular protein reabsorption. May have a role in cardio-renal homeostasis through regulation of diuresis and inhibiting aldosterone synthesis. In vitro, promotes the production of cGMP and induces vasodilation. May promote natriuresis, at least in part, by enhancing prostaglandin E2 synthesis resulting in the inhibition of renal Na+-K+-ATPase. May have a role in potassium excretion but not sodium excretion (natriuresis). Possibly enhances protein excretion in urine by decreasing proximal tubular protein reabsorption. Its function is as follows. Hormone produced in the kidneys that appears to be important for maintaining cardio-renal homeostasis. Mediates vasodilation, natriuresis and diuresis primarily in the renal system, in order to maintain the extracellular fluid volume and control the fluid-electrolyte balance. Specifically binds and stimulates cGMP production by renal transmembrane receptors, likely NPR1. Urodilatin not ANP, may be the natriuretic peptide responsible for the regulation of sodium and water homeostasis in the kidney. In terms of biological role, may have a role in cardio-renal homeostasis through regulation of natriuresis and vasodilation. In vivo promotes natriuresis and in vitro, vasodilates renal artery strips. Functionally, may have a role in cardio-renal homeostasis through regulation of regulation of natriuresis and vasodilation. In vivo promotes natriuresis. In vitro, vasodilates intestinal smooth muscle but not smooth muscle strips. May have a role in cardio-renal homeostasis through regulation of natriuresis and vasodilation. In vivo promotes natriuresis. In vitro, selectively vasodilates intestinal and vascular smooth muscle strips. Its function is as follows. May have a role in cardio-renal homeostasis through regulation of natriuresis and vasodilation. In vivo promotes natriuresis. In vitro, selectively vasodilates intestinal smooth muscle but not vascular smooth muscle strips. This Canis lupus familiaris (Dog) protein is Natriuretic peptides A (NPPA).